Here is a 273-residue protein sequence, read N- to C-terminus: MKDMKMQSSPETMMTRIPTPDPHSTGVREDAMDSVCKPWKLYENPYYCSSQSQQHQHQRKAFIWDLNFIKVFMESELGKAQDEIKELKAELDYERKARRRAELMIKKLAKDVEEERMAREAEEMQNKRLFKELSSEKSEMVRMKRDLEEERQMHRLAEVLREERVQMKLMDARLFLEEKLSELEEANRQGERERNRMMKPKILERACSSPARRRCENPQIKRGINPFPRVMRAIRSKSEKWGSKLECQKVQLKILLRQKTTPRCTPLLSSPPP.

Residues 1 to 12 are compositionally biased toward polar residues; it reads MKDMKMQSSPET. The interval 1–30 is disordered; that stretch reads MKDMKMQSSPETMMTRIPTPDPHSTGVRED. Residues 69-199 are a coiled coil; sequence IKVFMESELG…GERERNRMMK (131 aa).

In terms of assembly, interacts with STI.

In terms of biological role, acts as a key regulator of trichome branching. Could participate with STI in the same pathway. Also plays a role in integrating endoreplication levels with cell shape. This Arabidopsis thaliana (Mouse-ear cress) protein is Protein BRANCHLESS TRICHOME (BLT).